The following is a 188-amino-acid chain: Probable RNA-binding protein 18 (188 aa).

Residues 23-104 enclose the RRM domain; it reads HRLWIGNIDP…KKLVVRWAHA (82 aa). A disordered region spans residues 151–188; the sequence is EENPDDYSGPSAYTYNKPPDKREKRSQPYHKHFRKHRR. Residues 177–188 show a composition bias toward basic residues; it reads QPYHKHFRKHRR.

The protein is Probable RNA-binding protein 18 (rbm18) of Danio rerio (Zebrafish).